Consider the following 155-residue polypeptide: Small ribosomal subunit protein uS7c (155 aa).

The protein belongs to the universal ribosomal protein uS7 family. In terms of assembly, part of the 30S ribosomal subunit.

Its subcellular location is the plastid. The protein localises to the chloroplast. Its function is as follows. One of the primary rRNA binding proteins, it binds directly to 16S rRNA where it nucleates assembly of the head domain of the 30S subunit. The polypeptide is Small ribosomal subunit protein uS7c (rps7) (Saururus cernuus (Lizard's tail)).